A 347-amino-acid chain; its full sequence is Probable dual-specificity RNA methyltransferase RlmN (347 aa).

The active-site Proton acceptor is E90. Residues 96 to 326 (YKHGNSICIS…VTVRREMGSD (231 aa)) enclose the Radical SAM core domain. C103 and C331 are disulfide-bonded. Residues C110, C114, and C117 each coordinate [4Fe-4S] cluster. S-adenosyl-L-methionine contacts are provided by residues 157–158 (GE), S189, 212–214 (SLH), and N288. Catalysis depends on C331, which acts as the S-methylcysteine intermediate.

It belongs to the radical SAM superfamily. RlmN family. [4Fe-4S] cluster is required as a cofactor.

The protein localises to the cytoplasm. The enzyme catalyses adenosine(2503) in 23S rRNA + 2 reduced [2Fe-2S]-[ferredoxin] + 2 S-adenosyl-L-methionine = 2-methyladenosine(2503) in 23S rRNA + 5'-deoxyadenosine + L-methionine + 2 oxidized [2Fe-2S]-[ferredoxin] + S-adenosyl-L-homocysteine. It carries out the reaction adenosine(37) in tRNA + 2 reduced [2Fe-2S]-[ferredoxin] + 2 S-adenosyl-L-methionine = 2-methyladenosine(37) in tRNA + 5'-deoxyadenosine + L-methionine + 2 oxidized [2Fe-2S]-[ferredoxin] + S-adenosyl-L-homocysteine. Its function is as follows. Specifically methylates position 2 of adenine 2503 in 23S rRNA and position 2 of adenine 37 in tRNAs. In Clostridium botulinum (strain Eklund 17B / Type B), this protein is Probable dual-specificity RNA methyltransferase RlmN.